The primary structure comprises 340 residues: uncharacterized protein (340 aa).

2 helical membrane passes run 162–182 and 239–259; these read PLVP…VLAG and FWIS…IVVP.

It is found in the cell membrane. This is an uncharacterized protein from Mycobacterium bovis (strain ATCC BAA-935 / AF2122/97).